The following is a 164-amino-acid chain: Respiratory growth induced protein 2 (164 aa).

Belongs to the RGI1 family.

The protein resides in the cytoplasm. Functionally, involved in the control of energetic metabolism and significantly contribute to cell fitness, especially under respiratory growth conditions. This is Respiratory growth induced protein 2 (RGI2) from Candida glabrata (strain ATCC 2001 / BCRC 20586 / JCM 3761 / NBRC 0622 / NRRL Y-65 / CBS 138) (Yeast).